Consider the following 139-residue polypeptide: Large ribosomal subunit protein uL13 (139 aa).

This sequence belongs to the universal ribosomal protein uL13 family. In terms of assembly, part of the 50S ribosomal subunit.

This protein is one of the early assembly proteins of the 50S ribosomal subunit, although it is not seen to bind rRNA by itself. It is important during the early stages of 50S assembly. The polypeptide is Large ribosomal subunit protein uL13 (Wolinella succinogenes (strain ATCC 29543 / DSM 1740 / CCUG 13145 / JCM 31913 / LMG 7466 / NCTC 11488 / FDC 602W) (Vibrio succinogenes)).